The following is a 362-amino-acid chain: Mannan endo-1,4-beta-mannosidase (362 aa).

The N-terminal stretch at 1–26 (MFKKHTISLLIIFLLASAVLAKPIEA) is a signal peptide. The GH26 domain maps to 38–349 (QTTKTVMNWL…YHDSWTLNKG (312 aa)). Histidine 131 is a substrate binding site. Glutamate 193 (proton donor) is an active-site residue. Substrate is bound by residues tryptophan 198 and tyrosine 268. Catalysis depends on glutamate 292, which acts as the Nucleophile. 324–325 (WN) serves as a coordination point for substrate.

This sequence belongs to the glycosyl hydrolase 26 family. Homodimer.

The protein localises to the secreted. The enzyme catalyses Random hydrolysis of (1-&gt;4)-beta-D-mannosidic linkages in mannans, galactomannans and glucomannans.. In terms of biological role, involved in the degradation of glucomannan. Catalyzes the endo hydrolysis of beta-1,4-linked mannan, galactomannan and glucomannan. The sequence is that of Mannan endo-1,4-beta-mannosidase from Bacillus subtilis (strain 168).